Here is a 382-residue protein sequence, read N- to C-terminus: Serine/threonine-protein kinase (382 aa).

Residues 1–10 (MENKQCDHLT) are compositionally biased toward basic and acidic residues. The interval 1-75 (MENKQCDHLT…ASESDEDDDD (75 aa)) is disordered. Residues 12–24 (WFSTTSDASESMD) show a composition bias toward polar residues. A compositionally biased stretch (acidic residues) spans 45–75 (ADEDLYSDISEGDLEYSDCDSASESDEDDDD). The 287-residue stretch at 93–379 (YTVIKTLTPG…AEELLSYPMF (287 aa)) folds into the Protein kinase domain. ATP-binding positions include 99–107 (LTPGSEGRV) and Lys-122. Catalysis depends on Asp-207, which acts as the Proton acceptor.

Belongs to the protein kinase superfamily. Ser/Thr protein kinase family.

The enzyme catalyses L-seryl-[protein] + ATP = O-phospho-L-seryl-[protein] + ADP + H(+). It catalyses the reaction L-threonyl-[protein] + ATP = O-phospho-L-threonyl-[protein] + ADP + H(+). The protein is Serine/threonine-protein kinase (US2) of Equus caballus (Horse).